Reading from the N-terminus, the 436-residue chain is EPS I polysaccharide export inner membrane protein EpsE (436 aa).

A run of 12 helical transmembrane segments spans residues 20–40 (VLGL…NIML), 49–69 (FGLF…LATG), 91–111 (LCAF…ALYL), 132–152 (MAAI…FLYA), 160–180 (ASVS…MGPI), 184–204 (VVAL…QLVI), 234–254 (VLTT…LAAM), 261–281 (LALF…PATL), 307–327 (ALLF…LLAG), 341–361 (AAAS…SVLL), 375–395 (FAMA…ALRL), and 396–416 (GYGA…LILF).

This sequence to E.coli bicyclomycin resistance protein (BCR).

Its subcellular location is the cell inner membrane. Its function is as follows. Probably involved in polymerization and/or export of exopolysaccharide EPS I which functions as a virulence factor. May play a role in export of EPS I or its intermediates across the membranes. This chain is EPS I polysaccharide export inner membrane protein EpsE (epsE), found in Ralstonia nicotianae (strain ATCC BAA-1114 / GMI1000) (Ralstonia solanacearum).